A 680-amino-acid polypeptide reads, in one-letter code: Penicillin-binding protein 2B (680 aa).

Residues 1–8 (MRKFNSHS) lie on the Cytoplasmic side of the membrane. Residues 9–29 (IPIRLNLLFSIVILLFMTIIG) traverse the membrane as a helical segment. The Extracellular portion of the chain corresponds to 30–680 (RLLYMQVLNK…NLYQKYHPMN (651 aa)). The active-site Acyl-ester intermediate is the Ser386.

The protein belongs to the transpeptidase family. Interacts with MreC in the elongasome.

The protein resides in the cell membrane. In terms of biological role, a transpeptidase that forms peptide cross-links between adjacent glycan strands in cell wall peptidoglycan (PG). Part of the elongasome machinery that synthesizes peripheral PG. This chain is Penicillin-binding protein 2B, found in Streptococcus pneumoniae serotype 2 (strain D39 / NCTC 7466).